The chain runs to 175 residues: Shikimate kinase (175 aa).

Position 11-16 (11-16) interacts with ATP; the sequence is GAGKTT. Threonine 15 is a Mg(2+) binding site. The substrate site is built by aspartate 33, arginine 57, and glycine 79. An ATP-binding site is contributed by arginine 118. Residue arginine 140 coordinates substrate.

This sequence belongs to the shikimate kinase family. Monomer. It depends on Mg(2+) as a cofactor.

It localises to the cytoplasm. It catalyses the reaction shikimate + ATP = 3-phosphoshikimate + ADP + H(+). It participates in metabolic intermediate biosynthesis; chorismate biosynthesis; chorismate from D-erythrose 4-phosphate and phosphoenolpyruvate: step 5/7. Functionally, catalyzes the specific phosphorylation of the 3-hydroxyl group of shikimic acid using ATP as a cosubstrate. The polypeptide is Shikimate kinase (Bacteroides thetaiotaomicron (strain ATCC 29148 / DSM 2079 / JCM 5827 / CCUG 10774 / NCTC 10582 / VPI-5482 / E50)).